Consider the following 244-residue polypeptide: ATP synthase subunit a (244 aa).

The next 6 helical transmembrane spans lie at 25-45 (ISFTNASLFMVISSLAILLIF), 85-105 (YFAFIFSIFMFVLFCNMFGMI), 115-135 (IIVTFILASFIFVGVTIIGFM), 144-164 (LFVPSGVPAVLLPLIVVIEII), 193-213 (GFVISLGIVGGWLPLSFSVAL), and 216-236 (LEILVAFLQAYVFAILTCIYL).

Belongs to the ATPase A chain family. As to quaternary structure, F-type ATPases have 2 components, CF(1) - the catalytic core - and CF(0) - the membrane proton channel. CF(1) has five subunits: alpha(3), beta(3), gamma(1), delta(1), epsilon(1). CF(0) has three main subunits: a(1), b(2) and c(9-12). The alpha and beta chains form an alternating ring which encloses part of the gamma chain. CF(1) is attached to CF(0) by a central stalk formed by the gamma and epsilon chains, while a peripheral stalk is formed by the delta and b chains.

The protein localises to the cell inner membrane. In terms of biological role, key component of the proton channel; it plays a direct role in the translocation of protons across the membrane. This chain is ATP synthase subunit a, found in Pelagibacter ubique (strain HTCC1062).